The chain runs to 170 residues: Protein HemX (170 aa).

A compositionally biased stretch (polar residues) spans 1-17; sequence MTEQKNTNENDLQNGTS. The tract at residues 1–24 is disordered; it reads MTEQKNTNENDLQNGTSKADDDIR. Residues 37 to 57 form a helical membrane-spanning segment; it reads GLIGSAVAILVILAIGGGLYY.

It is found in the cell membrane. The sequence is that of Protein HemX from Proteus mirabilis.